Consider the following 307-residue polypeptide: Putative oxidoreductase YceM (307 aa).

Belongs to the Gfo/Idh/MocA family.

This Salmonella typhimurium (strain LT2 / SGSC1412 / ATCC 700720) protein is Putative oxidoreductase YceM (yceM).